A 205-amino-acid polypeptide reads, in one-letter code: Outer-membrane lipoprotein carrier protein (205 aa).

The signal sequence occupies residues 1-21 (MKKIVLLVTLVFSINYSFANA).

Belongs to the LolA family. As to quaternary structure, monomer.

The protein localises to the periplasm. In terms of biological role, participates in the translocation of lipoproteins from the inner membrane to the outer membrane. Only forms a complex with a lipoprotein if the residue after the N-terminal Cys is not an aspartate (The Asp acts as a targeting signal to indicate that the lipoprotein should stay in the inner membrane). The sequence is that of Outer-membrane lipoprotein carrier protein from Francisella philomiragia subsp. philomiragia (strain ATCC 25017 / CCUG 19701 / FSC 153 / O#319-036).